Here is a 430-residue protein sequence, read N- to C-terminus: Adenylosuccinate synthetase (430 aa).

GTP is bound by residues glycine 12–lysine 18 and glycine 40–threonine 42. Aspartate 13 functions as the Proton acceptor in the catalytic mechanism. Mg(2+) contacts are provided by aspartate 13 and glycine 40. Residues aspartate 13–lysine 16, asparagine 38–histidine 41, threonine 128, arginine 142, glutamine 223, threonine 238, and arginine 302 each bind IMP. Histidine 41 acts as the Proton donor in catalysis. Threonine 298–arginine 304 serves as a coordination point for substrate. GTP is bound by residues arginine 304, cysteine 330–aspartate 332, and serine 412–glycine 414.

It belongs to the adenylosuccinate synthetase family. As to quaternary structure, homodimer. Requires Mg(2+) as cofactor.

It is found in the cytoplasm. It catalyses the reaction IMP + L-aspartate + GTP = N(6)-(1,2-dicarboxyethyl)-AMP + GDP + phosphate + 2 H(+). It participates in purine metabolism; AMP biosynthesis via de novo pathway; AMP from IMP: step 1/2. In terms of biological role, plays an important role in the de novo pathway of purine nucleotide biosynthesis. Catalyzes the first committed step in the biosynthesis of AMP from IMP. The polypeptide is Adenylosuccinate synthetase (Ligilactobacillus salivarius (strain UCC118) (Lactobacillus salivarius)).